The sequence spans 513 residues: GMP synthase [glutamine-hydrolyzing] (513 aa).

A Glutamine amidotransferase type-1 domain is found at 8–198 (MILVLDFGSQ…VFGVCDCDGK (191 aa)). The active-site Nucleophile is C85. Catalysis depends on residues H172 and E174. The GMPS ATP-PPase domain maps to 199–388 (WSMENFIEIE…LGIPDDIVWR (190 aa)). 226–232 (SGGVDSS) lines the ATP pocket.

In terms of assembly, homodimer.

It carries out the reaction XMP + L-glutamine + ATP + H2O = GMP + L-glutamate + AMP + diphosphate + 2 H(+). Its pathway is purine metabolism; GMP biosynthesis; GMP from XMP (L-Gln route): step 1/1. Its function is as follows. Catalyzes the synthesis of GMP from XMP. In Bacillus pumilus (strain SAFR-032), this protein is GMP synthase [glutamine-hydrolyzing].